The following is a 134-amino-acid chain: Cytochrome b5 (134 aa).

N-acetylalanine is present on Ala-2. N6-acetyllysine is present on residues Lys-7, Lys-10, and Lys-19. Residues 9 to 85 (VKYYTLEEIK…SKTFIIGELH (77 aa)) enclose the Cytochrome b5 heme-binding domain. Positions 44 and 68 each coordinate heme. The chain crosses the membrane as a helical span at residues 109–131 (WWTNWVIPAISALIVALMYRLYM).

The protein belongs to the cytochrome b5 family.

It is found in the endoplasmic reticulum membrane. It localises to the microsome membrane. Cytochrome b5 is a membrane-bound hemoprotein functioning as an electron carrier for several membrane-bound oxygenases. This Oryctolagus cuniculus (Rabbit) protein is Cytochrome b5 (CYB5A).